A 258-amino-acid chain; its full sequence is Small ribosomal subunit protein uS2 (258 aa).

Positions 226–258 (QGVSNEEVAAEQNIDLDEKEKSEETEATEATEE) are disordered.

Belongs to the universal ribosomal protein uS2 family.

The protein is Small ribosomal subunit protein uS2 of Staphylococcus aureus (strain COL).